The following is a 215-amino-acid chain: Adenylate kinase (215 aa).

ATP is bound at residue 10-15 (GAGKGT). The interval 30–59 (STGDILRENVKNQTELGKKAKEYMDKGLLV) is NMP. Residues Thr-31, Arg-36, 57 to 59 (LLV), 85 to 88 (GFPR), and Gln-92 each bind AMP. An LID region spans residues 126 to 163 (GRRICKSCGASFHVVYRPPKKEGICDICGGQLYQREDD). Position 127 (Arg-127) interacts with ATP. 2 residues coordinate Zn(2+): Cys-130 and Cys-133. 136 to 137 (SF) contacts ATP. Zn(2+) contacts are provided by Cys-150 and Cys-153. AMP-binding residues include Arg-160 and Arg-171. Residue Glu-199 coordinates ATP.

Belongs to the adenylate kinase family. Monomer.

Its subcellular location is the cytoplasm. The catalysed reaction is AMP + ATP = 2 ADP. It participates in purine metabolism; AMP biosynthesis via salvage pathway; AMP from ADP: step 1/1. Catalyzes the reversible transfer of the terminal phosphate group between ATP and AMP. Plays an important role in cellular energy homeostasis and in adenine nucleotide metabolism. The polypeptide is Adenylate kinase (Caldicellulosiruptor saccharolyticus (strain ATCC 43494 / DSM 8903 / Tp8T 6331)).